A 328-amino-acid chain; its full sequence is Anthranilate phosphoribosyltransferase (328 aa).

Residues Gly-79, 82-83 (GD), Thr-87, 89-92 (NIST), 107-115 (KHGNYAVSS), and Ser-119 each bind 5-phospho-alpha-D-ribose 1-diphosphate. Position 79 (Gly-79) interacts with anthranilate. Residue Ser-91 participates in Mg(2+) binding. Asn-110 contacts anthranilate. Anthranilate is bound at residue Arg-165. Residues Asp-223 and Glu-224 each contribute to the Mg(2+) site.

Belongs to the anthranilate phosphoribosyltransferase family. Homodimer. The cofactor is Mg(2+).

It catalyses the reaction N-(5-phospho-beta-D-ribosyl)anthranilate + diphosphate = 5-phospho-alpha-D-ribose 1-diphosphate + anthranilate. It participates in amino-acid biosynthesis; L-tryptophan biosynthesis; L-tryptophan from chorismate: step 2/5. Functionally, catalyzes the transfer of the phosphoribosyl group of 5-phosphorylribose-1-pyrophosphate (PRPP) to anthranilate to yield N-(5'-phosphoribosyl)-anthranilate (PRA). This chain is Anthranilate phosphoribosyltransferase, found in Cytophaga hutchinsonii (strain ATCC 33406 / DSM 1761 / CIP 103989 / NBRC 15051 / NCIMB 9469 / D465).